The following is a 406-amino-acid chain: Cysteine desulfurase (406 aa).

An N6-(pyridoxal phosphate)lysine modification is found at Lys-226. The active-site Cysteine persulfide intermediate is the Cys-364.

It belongs to the class-V pyridoxal-phosphate-dependent aminotransferase family. Csd subfamily. Homodimer. Interacts with SufE and the SufBCD complex composed of SufB, SufC and SufD. The interaction with SufE is required to mediate the direct transfer of the sulfur atom from the S-sulfanylcysteine. Requires pyridoxal 5'-phosphate as cofactor.

Its subcellular location is the cytoplasm. It catalyses the reaction (sulfur carrier)-H + L-cysteine = (sulfur carrier)-SH + L-alanine. The enzyme catalyses L-selenocysteine + AH2 = hydrogenselenide + L-alanine + A + H(+). The protein operates within cofactor biosynthesis; iron-sulfur cluster biosynthesis. In terms of biological role, cysteine desulfurases mobilize the sulfur from L-cysteine to yield L-alanine, an essential step in sulfur metabolism for biosynthesis of a variety of sulfur-containing biomolecules. Component of the suf operon, which is activated and required under specific conditions such as oxidative stress and iron limitation. Acts as a potent selenocysteine lyase in vitro, that mobilizes selenium from L-selenocysteine. Selenocysteine lyase activity is however unsure in vivo. The protein is Cysteine desulfurase of Escherichia fergusonii (strain ATCC 35469 / DSM 13698 / CCUG 18766 / IAM 14443 / JCM 21226 / LMG 7866 / NBRC 102419 / NCTC 12128 / CDC 0568-73).